The primary structure comprises 395 residues: Chorismate synthase (395 aa).

Positions 40 and 46 each coordinate NADP(+). Residues 135–137 (RAS) and 256–257 (QA) each bind FMN. A compositionally biased stretch (basic and acidic residues) spans 272–283 (RRGSQAHDEMRP). Residues 272–296 (RRGSQAHDEMRPGPDGILRSTNRAG) are disordered. Residues Gly300, 315–319 (KPIST), and Arg341 contribute to the FMN site.

The protein belongs to the chorismate synthase family. As to quaternary structure, homotetramer. FMNH2 serves as cofactor.

It carries out the reaction 5-O-(1-carboxyvinyl)-3-phosphoshikimate = chorismate + phosphate. Its pathway is metabolic intermediate biosynthesis; chorismate biosynthesis; chorismate from D-erythrose 4-phosphate and phosphoenolpyruvate: step 7/7. Its function is as follows. Catalyzes the anti-1,4-elimination of the C-3 phosphate and the C-6 proR hydrogen from 5-enolpyruvylshikimate-3-phosphate (EPSP) to yield chorismate, which is the branch point compound that serves as the starting substrate for the three terminal pathways of aromatic amino acid biosynthesis. This reaction introduces a second double bond into the aromatic ring system. The polypeptide is Chorismate synthase (Rhodococcus jostii (strain RHA1)).